The chain runs to 681 residues: Sodium-dependent phosphate transporter 1 (681 aa).

Transmembrane regions (helical) follow at residues 25–45 (NLWM…SVGA), 66–86 (ACIL…AKVS), 106–126 (LMAG…VASF), 162–182 (IVMS…ILFF), 201–221 (ALPI…MYTG), and 234–254 (GTIL…WFFV). A disordered region spans residues 266 to 295 (VKSSPSESPLMEKKNNLKDHEETKMAPGDV). Phosphoserine occurs at positions 269 and 273. Over residues 275-289 (LMEKKNNLKDHEETK) the composition is skewed to basic and acidic residues. 4 helical membrane-spanning segments follow: residues 513–533 (VSLL…FAHG), 561–581 (ATPI…LWVW), 602–622 (FSIE…GLPI), and 652–672 (IFMA…AIMA).

Belongs to the inorganic phosphate transporter (PiT) (TC 2.A.20) family. As to expression, ubiquitously expressed.

The protein resides in the cell membrane. The catalysed reaction is 2 Na(+)(out) + phosphate(out) = 2 Na(+)(in) + phosphate(in). Functionally, sodium-phosphate symporter which preferentially transports the monovalent form of phosphate with a stoichiometry of two sodium ions per phosphate ion. May play a role in extracellular matrix and cartilage calcification as well as in vascular calcification. Essential for cell proliferation but this function is independent of its phosphate transporter activity. This chain is Sodium-dependent phosphate transporter 1 (Slc20a1), found in Rattus norvegicus (Rat).